The following is a 391-amino-acid chain: Xylose isomerase (391 aa).

Catalysis depends on residues His-54 and Asp-57. Glu-181, Glu-217, His-220, Asp-245, Asp-255, Asp-257, and Asp-287 together coordinate Mg(2+).

This sequence belongs to the xylose isomerase family. In terms of assembly, homotetramer. Requires Mg(2+) as cofactor.

Its subcellular location is the cytoplasm. It catalyses the reaction alpha-D-xylose = alpha-D-xylulofuranose. Functionally, involved in D-xylose catabolism. The chain is Xylose isomerase (xylA) from Streptomyces albus G.